Consider the following 130-residue polypeptide: Small ribosomal subunit protein uS8 (130 aa).

Lysine 88 carries the N6-succinyllysine modification.

Belongs to the universal ribosomal protein uS8 family. In terms of assembly, component of the small ribosomal subunit. Part of the small subunit (SSU) processome, composed of more than 70 proteins and the RNA chaperone small nucleolar RNA (snoRNA) U3.

The protein localises to the cytoplasm. It localises to the nucleus. It is found in the nucleolus. Its function is as follows. Component of the small ribosomal subunit. The ribosome is a large ribonucleoprotein complex responsible for the synthesis of proteins in the cell. Part of the small subunit (SSU) processome, first precursor of the small eukaryotic ribosomal subunit. During the assembly of the SSU processome in the nucleolus, many ribosome biogenesis factors, an RNA chaperone and ribosomal proteins associate with the nascent pre-rRNA and work in concert to generate RNA folding, modifications, rearrangements and cleavage as well as targeted degradation of pre-ribosomal RNA by the RNA exosome. Required for proper erythropoiesis. The sequence is that of Small ribosomal subunit protein uS8 (Rps15a) from Mus musculus (Mouse).